The primary structure comprises 489 residues: NADH-ubiquinone oxidoreductase chain 2 (489 aa).

The next 13 membrane-spanning stretches (helical) occupy residues 9–29 (LFPE…GVVF), 47–67 (LGLL…PLAV), 80–100 (FTYF…VMCL), 114–134 (IVLI…YDLI), 168–188 (FILG…IYGF), 216–236 (IFMG…AVPF), 248–268 (PTIV…ANML), 280–300 (WQQL…LAAM), 309–329 (LAYS…CGTI), 335–355 (LLIG…IVLA), 376–396 (ILAI…PLAG), 401–421 (FYLF…IGVV), and 459–479 (LAIT…LFLV).

It belongs to the complex I subunit 2 family.

The protein resides in the mitochondrion inner membrane. The catalysed reaction is a ubiquinone + NADH + 5 H(+)(in) = a ubiquinol + NAD(+) + 4 H(+)(out). Core subunit of the mitochondrial membrane respiratory chain NADH dehydrogenase (Complex I) that is believed to belong to the minimal assembly required for catalysis. Complex I functions in the transfer of electrons from NADH to the respiratory chain. The immediate electron acceptor for the enzyme is believed to be ubiquinone. This is NADH-ubiquinone oxidoreductase chain 2 (ND2) from Marchantia polymorpha (Common liverwort).